The following is a 410-amino-acid chain: WD repeat and FYVE domain-containing protein 1 (410 aa).

6 WD repeats span residues 22-61 (GHQD…QYWP), 66-105 (TMAS…NKMN), 112-150 (AHQN…NMLG), 153-192 (FFTS…CSVI), 197-236 (GHEG…GRTL), and 240-279 (GHHD…EEAP). The segment at 281-352 (WLESDSCQKC…VCDSCYDSIK (72 aa)) adopts an FYVE-type zinc-finger fold. Positions 287, 290, 314, 317, 322, 325, 344, and 347 each coordinate Zn(2+). A WD 7 repeat occupies 364 to 403 (EGKHNISHMSMDIARGLMVTCGTDRIVKIWDMTPVVGCSL). Residue Ser408 is modified to Phosphoserine.

Binds PtdIns3P in vitro with high specificity over other phosphoinositides. Interacts (via WD repeat 2) with tyrosine-phosphorylated TLR3 (via TIR domain) in response to poly(I:C). Interacts with TICAM1 in response to poly(I:C). Interacts with TLR4 in response to LPS.

It localises to the early endosome. In terms of biological role, positively regulates TLR3- and TLR4-mediated signaling pathways by bridging the interaction between TLR3 or TLR4 and TICAM1. Promotes TLR3/4 ligand-induced activation of transcription factors IRF3 and NF-kappa-B, as well as the production of IFN-beta and inflammatory cytokines. In Homo sapiens (Human), this protein is WD repeat and FYVE domain-containing protein 1 (WDFY1).